A 334-amino-acid polypeptide reads, in one-letter code: Protein-methionine-sulfoxide reductase catalytic subunit MsrP (334 aa).

Residues 1–44 constitute a signal peptide (tat-type signal); it reads MKKVSRLTEADVTAESAFFMQRRQVLKALGITTAALSLPTAAHA. Mo-molybdopterin-binding positions include N88, 91 to 92, C146, T181, N233, R238, and 249 to 251; these read YE and GIK.

Belongs to the MsrP family. Heterodimer of a catalytic subunit (MsrP) and a heme-binding subunit (MsrQ). It depends on Mo-molybdopterin as a cofactor. Post-translationally, predicted to be exported by the Tat system. The position of the signal peptide cleavage has not been experimentally proven.

The protein localises to the periplasm. The catalysed reaction is L-methionyl-[protein] + a quinone + H2O = L-methionyl-(S)-S-oxide-[protein] + a quinol. It catalyses the reaction L-methionyl-[protein] + a quinone + H2O = L-methionyl-(R)-S-oxide-[protein] + a quinol. Part of the MsrPQ system that repairs oxidized periplasmic proteins containing methionine sulfoxide residues (Met-O), using respiratory chain electrons. Thus protects these proteins from oxidative-stress damage caused by reactive species of oxygen and chlorine generated by the host defense mechanisms. MsrPQ is essential for the maintenance of envelope integrity under bleach stress, rescuing a wide series of structurally unrelated periplasmic proteins from methionine oxidation. The catalytic subunit MsrP is non-stereospecific, being able to reduce both (R-) and (S-) diastereoisomers of methionine sulfoxide. In Cronobacter sakazakii (strain ATCC BAA-894) (Enterobacter sakazakii), this protein is Protein-methionine-sulfoxide reductase catalytic subunit MsrP.